A 285-amino-acid chain; its full sequence is MSEVGICKSLAGGGSLLAPKEGGGWHHPVEREEHPVGDANTVSEGHDKESAYQNPGQLVKAEAQEDDWKELGKKRHRRLRSKNKRRWKPYDKLTWEEKKELEERQSQRASRIRAEMIAKGQPVAPYNTTQFLMEDHDQEEPDLCPPPRKSSAALPLALNNSSYKGDSTDDDLEEEEDEAGSDGMGGYDGEDFLQKDFSETYERYHAESLQDMSKQDLIKEYLELEKCLSRMEEENNHLRVQSLASAPAADHRDTRIQELQVELEKLKEENQRLLQEGKQVAADSP.

Disordered stretches follow at residues 1–56 (MSEV…QNPG) and 132–196 (LMED…LQKD). Over residues 23–36 (GGWHHPVEREEHPV) the composition is skewed to basic and acidic residues. Residues 168–180 (TDDDLEEEEDEAG) show a composition bias toward acidic residues. Positions 213-284 (SKQDLIKEYL…QEGKQVAADS (72 aa)) form a coiled coil.

The protein belongs to the HEXIM family. In terms of assembly, homooligomer and heterooligomer. Core component of the 7SK RNP complex.

The protein localises to the nucleus. It is found in the cytoplasm. Functionally, transcriptional regulator which functions as a general RNA polymerase II transcription inhibitor. Core component of the 7SK RNP complex: in cooperation with 7SK snRNA sequesters P-TEFb in a large inactive 7SK snRNP complex preventing RNA polymerase II phosphorylation and subsequent transcriptional elongation. Plays a role in the regulation of DNA virus-mediated innate immune response by assembling into the HDP-RNP complex, a complex that serves as a platform for IRF3 phosphorylation and subsequent innate immune response activation through the cGAS-STING pathway. The polypeptide is Protein HEXIM1 (hexim1) (Xenopus laevis (African clawed frog)).